A 489-amino-acid chain; its full sequence is MRLCIPQVLLALFLSMLTAPGEGSRRRATQARDTTQPALLRLSDHLLANYKKGVRPVRDWRKPTTVSIDVIMYAILNVDEKNQVLTTYIWYRQYWTDEFLQWTPEDFDNVTKLSIPTDSIWVPDILINEFVDVGKSPNIPYVYVHHRGEVQNYKPLQLVTACSLDIYNFPFDVQNCSLTFTSWLHTIQDINITLWRSPEEVRSDKSIFINQGEWELLEVFPQFKEFSIDISNSYAEMKFYVIIRRRPLFYAVSLLLPSIFLMVVDIVGFCLPPDSGERVSFKITLLLGYSVFLIIVSDTLPATAIGTPLIGVYFVVCMALLVISLAETIFIVRLVHKQDLQRPVPDWLRHLVLDRIAWILCLGEQPMAHRPPATFQANKTDDCSGSDLLPAMGNHCSHVGGPQDLEKTPRGRGSPLPPPREASLAVRGLLQELSSIRHFLEKRDEMREVARDWLRVGYVLDRLLFRIYLLAVLAYSITLVTLWSIWHYS.

The signal sequence occupies residues 1–23 (MRLCIPQVLLALFLSMLTAPGEG). Residues 24–246 (SRRRATQARD…MKFYVIIRRR (223 aa)) are Extracellular-facing. N-linked (GlcNAc...) asparagine glycans are attached at residues asparagine 109, asparagine 175, and asparagine 191. Cysteine 162 and cysteine 176 are oxidised to a cystine. Residues 247-273 (PLFYAVSLLLPSIFLMVVDIVGFCLPP) traverse the membrane as a helical segment. Residues 274–278 (DSGER) are Cytoplasmic-facing. A helical membrane pass occupies residues 279–297 (VSFKITLLLGYSVFLIIVS). Residues 298–307 (DTLPATAIGT) are Extracellular-facing. A helical transmembrane segment spans residues 308 to 326 (PLIGVYFVVCMALLVISLA). Over 327–466 (ETIFIVRLVH…GYVLDRLLFR (140 aa)) the chain is Cytoplasmic. An HA-stretch; determines single-channel conductance in 5-HT3 receptors region spans residues 425-461 (AVRGLLQELSSIRHFLEKRDEMREVARDWLRVGYVLD). Residues 467-486 (IYLLAVLAYSITLVTLWSIW) traverse the membrane as a helical segment. Topologically, residues 487 to 489 (HYS) are extracellular.

The protein belongs to the ligand-gated ion channel (TC 1.A.9) family. 5-hydroxytryptamine receptor (TC 1.A.9.2) subfamily. HTR3A sub-subfamily. In terms of assembly, forms homopentameric as well as heteropentameric serotonin-activated cation-selective channel complexes with HTR3B or HTR3C or HTR3D or HTR3E. The homomeric complex is functional but exhibits low conductance with modified voltage dependence, and decreased agonist and antagonist affinity. Heteropentameric complexes display properties which resemble that of neuronal serotonin-activated channels in vivo. Interacts with RIC3. Brain, spinal cord, and heart.

It is found in the postsynaptic cell membrane. The protein localises to the cell membrane. It carries out the reaction Na(+)(in) = Na(+)(out). It catalyses the reaction K(+)(in) = K(+)(out). The enzyme catalyses Ca(2+)(in) = Ca(2+)(out). The catalysed reaction is Mg(2+)(in) = Mg(2+)(out). Functionally, forms serotonin (5-hydroxytryptamine/5-HT3)-activated cation-selective channel complexes, which when activated cause fast, depolarizing responses in neurons. The polypeptide is 5-hydroxytryptamine receptor 3A (Mus musculus (Mouse)).